A 225-amino-acid polypeptide reads, in one-letter code: Glutathione S-transferase A (225 aa).

The GST N-terminal domain occupies 3 to 85 (KDMTLLWGSG…YLESQFKSQG (83 aa)). Residue R18 coordinates glutathione. The GST C-terminal domain occupies 92 to 217 (CPAEQAMMYQ…WPPTWLESPQ (126 aa)).

The protein belongs to the GST superfamily. Theta family. As to quaternary structure, homodimer. Found in all the tissues examined. Highest values found in liver and in intestinal mucosa.

It is found in the cytoplasm. The enzyme catalyses RX + glutathione = an S-substituted glutathione + a halide anion + H(+). Functionally, conjugation of reduced glutathione to a wide number of exogenous and endogenous hydrophobic electrophiles. The protein is Glutathione S-transferase A of Pleuronectes platessa (European plaice).